The primary structure comprises 724 residues: Long-chain-fatty-acid--CoA ligase ACSBG1 (724 aa).

Residues 1-51 (MPRNSGAGYGCPHGDPSMLDSRETPQESRQDMTVGTTQEKLKTSSLTDRQP) form a disordered region. The span at 20–30 (DSRETPQESRQ) shows a compositional bias: basic and acidic residues. Over residues 31 to 51 (DMTVGTTQEKLKTSSLTDRQP) the composition is skewed to polar residues. Residues Ser53 and Ser56 each carry the phosphoserine modification. ATP contacts are provided by residues 282-290 (TSGTTGNPK), 472-477 (AGYGLS), Asp550, and Arg565. At Tyr658 the chain carries Phosphotyrosine. Lys701 is an ATP binding site.

This sequence belongs to the ATP-dependent AMP-binding enzyme family. Bubblegum subfamily.

The protein resides in the cytoplasm. The protein localises to the cytoplasmic vesicle. It is found in the microsome. Its subcellular location is the endoplasmic reticulum. It localises to the cell membrane. The enzyme catalyses a long-chain fatty acid + ATP + CoA = a long-chain fatty acyl-CoA + AMP + diphosphate. The catalysed reaction is (E)-hexadec-2-enoate + ATP + CoA = (2E)-hexadecenoyl-CoA + AMP + diphosphate. It carries out the reaction hexadecanoate + ATP + CoA = hexadecanoyl-CoA + AMP + diphosphate. Its function is as follows. Catalyzes the conversion of fatty acids such as long-chain and very long-chain fatty acids to their active form acyl-CoAs for both synthesis of cellular lipids, and degradation via beta-oxidation. Can activate diverse saturated, monosaturated and polyunsaturated fatty acids. The sequence is that of Long-chain-fatty-acid--CoA ligase ACSBG1 from Macaca fascicularis (Crab-eating macaque).